The sequence spans 100 residues: Urease subunit gamma (100 aa).

The protein belongs to the urease gamma subunit family. In terms of assembly, heterotrimer of UreA (gamma), UreB (beta) and UreC (alpha) subunits. Three heterotrimers associate to form the active enzyme. The apoenzyme interacts with an accessory complex composed of UreD, UreF and UreG, which is required for the assembly of the nickel containing metallocenter of UreC. The UreE protein may also play a direct role as a metallochaperone in nickel transfer to the urease apoprotein.

It is found in the cytoplasm. It carries out the reaction urea + 2 H2O + H(+) = hydrogencarbonate + 2 NH4(+). Its pathway is nitrogen metabolism; urea degradation; CO(2) and NH(3) from urea (urease route): step 1/1. Its activity is regulated as follows. The apoenzyme can be activated in vitro in the presence of nickel ions and carbon dioxide, which promotes carbamylation of 'Lys-217' of the UreC (alpha) subunit. The polypeptide is Urease subunit gamma (Klebsiella aerogenes (Enterobacter aerogenes)).